The primary structure comprises 314 residues: MANLKRIRDRIKAVKNTRKITEAMRLVAAARVRRAQEQVMATRPFADRLAQVFYRLQTRLRLEDVNLPLLKQRPIQTVGLLVVAGDRGLCGAYNANVIKRTEERVRELQETGQQVQLYLVGRKAVQYFQRRSAPIAKTYVNLSQIPTAAEAAQIGDQLLAAFLSEKVDKVELLYTRFVSLISSRPVVQSLLPLDPSRLATQDDEIFRLLVRGGEFTVERSKVIAAVSAPPQDMIFEQDPVQILDALLPLYLNNQLLRALQEAAASELAARMTAMNNASDNASELIRTLGLAYNKARQAAITQEILEVVAGAEAL.

Belongs to the ATPase gamma chain family. As to quaternary structure, F-type ATPases have 2 components, CF(1) - the catalytic core - and CF(0) - the membrane proton channel. CF(1) has five subunits: alpha(3), beta(3), gamma(1), delta(1), epsilon(1). CF(0) has three main subunits: a, b and c.

It is found in the cellular thylakoid membrane. Produces ATP from ADP in the presence of a proton gradient across the membrane. The gamma chain is believed to be important in regulating ATPase activity and the flow of protons through the CF(0) complex. This is ATP synthase gamma chain from Synechococcus sp. (strain JA-2-3B'a(2-13)) (Cyanobacteria bacterium Yellowstone B-Prime).